Here is a 445-residue protein sequence, read N- to C-terminus: KIN17-like protein (445 aa).

The C2H2-type zinc-finger motif lies at 26-50 (WYCQLCEKQCRDENGFKCHISSESH). Low complexity-rich tracts occupy residues 215–229 (NTTTTTTNTTTTTTN) and 239–253 (NDNNSSNNNYNDQTN). Residues 215-256 (NTTTTTTNTTTTTTNKNIFDKLKTNDNNSSNNNYNDQTNPKP) are disordered.

This sequence belongs to the KIN17 family.

This is KIN17-like protein from Dictyostelium discoideum (Social amoeba).